The sequence spans 107 residues: Nucleoid-associated protein Lferr_1592 (107 aa).

Belongs to the YbaB/EbfC family. In terms of assembly, homodimer.

The protein localises to the cytoplasm. The protein resides in the nucleoid. Binds to DNA and alters its conformation. May be involved in regulation of gene expression, nucleoid organization and DNA protection. This Acidithiobacillus ferrooxidans (strain ATCC 53993 / BNL-5-31) (Leptospirillum ferrooxidans (ATCC 53993)) protein is Nucleoid-associated protein Lferr_1592.